A 152-amino-acid polypeptide reads, in one-letter code: Protein SprT-like (152 aa).

The SprT-like domain occupies 7-147 (QRLVEEVSLQ…CGKCKGKLKP (141 aa)). H67 provides a ligand contact to Zn(2+). E68 is an active-site residue. H71 provides a ligand contact to Zn(2+).

Belongs to the SprT family. The cofactor is Zn(2+).

The protein resides in the cytoplasm. The polypeptide is Protein SprT-like (Bacillus cereus (strain G9842)).